The primary structure comprises 140 residues: Nucleoside diphosphate kinase (140 aa).

ATP-binding residues include lysine 11, phenylalanine 59, arginine 87, threonine 93, arginine 104, and asparagine 114. The active-site Pros-phosphohistidine intermediate is histidine 117.

The protein belongs to the NDK family. In terms of assembly, homotetramer. Requires Mg(2+) as cofactor.

Its subcellular location is the cytoplasm. The catalysed reaction is a 2'-deoxyribonucleoside 5'-diphosphate + ATP = a 2'-deoxyribonucleoside 5'-triphosphate + ADP. The enzyme catalyses a ribonucleoside 5'-diphosphate + ATP = a ribonucleoside 5'-triphosphate + ADP. Its function is as follows. Major role in the synthesis of nucleoside triphosphates other than ATP. The ATP gamma phosphate is transferred to the NDP beta phosphate via a ping-pong mechanism, using a phosphorylated active-site intermediate. The protein is Nucleoside diphosphate kinase of Rhodopseudomonas palustris (strain BisA53).